The primary structure comprises 118 residues: Late cornified envelope protein 1E (118 aa).

A compositionally biased stretch (low complexity) spans 1–10 (MSCQQSQQQC). 2 disordered regions span residues 1–23 (MSCQQSQQQCQPPPKCTPKCPPK) and 84–118 (RSHRHRPQSSDCCSQPSGGSSCCGGGSGQHSGGCC). A compositionally biased stretch (pro residues) spans 11–23 (QPPPKCTPKCPPK). Residues 92–103 (SSDCCSQPSGGS) are compositionally biased toward low complexity. Gly residues predominate over residues 104 to 118 (SCCGGGSGQHSGGCC).

It belongs to the LCE family. Interacts with CYSRT1. Skin-specific. Expression was readily detected in adult trunk skin, adult arm skin, fetal skin, penal skin, vulva, esophagus and tongue. Not expressed in the cervix, rectum, lung, colon, or placenta.

Its function is as follows. Precursors of the cornified envelope of the stratum corneum. The chain is Late cornified envelope protein 1E (LCE1E) from Homo sapiens (Human).